Here is a 129-residue protein sequence, read N- to C-terminus: Small ribosomal subunit protein uS8 (129 aa).

Belongs to the universal ribosomal protein uS8 family. Part of the 30S ribosomal subunit. Contacts proteins S5 and S12.

Its function is as follows. One of the primary rRNA binding proteins, it binds directly to 16S rRNA central domain where it helps coordinate assembly of the platform of the 30S subunit. This is Small ribosomal subunit protein uS8 from Dichelobacter nodosus (strain VCS1703A).